A 483-amino-acid chain; its full sequence is Deoxyribodipyrimidine photo-lyase (483 aa).

One can recognise a Photolyase/cryptochrome alpha/beta domain in the interval 2–136; it reads QKNLIWFRND…LVKGFHDNLL (135 aa). Positions 109 and 110 each coordinate (6R)-5,10-methylene-5,6,7,8-tetrahydrofolate. Y225 contacts FAD. R229 lines the DNA pocket. Position 237-241 (237-241) interacts with FAD; sequence TSMLS. 2 interaction with DNA regions span residues 278 to 285 and 345 to 346; these read QILWREFY and NR. 376–378 is a binding site for FAD; that stretch reads DGD. Q408 contributes to the DNA binding site.

This sequence belongs to the DNA photolyase class-1 family. As to quaternary structure, monomer. Requires FAD as cofactor. (6R)-5,10-methylene-5,6,7,8-tetrahydrofolate is required as a cofactor.

It carries out the reaction cyclobutadipyrimidine (in DNA) = 2 pyrimidine residues (in DNA).. Functionally, involved in repair of UV radiation-induced DNA damage. Catalyzes the light-dependent monomerization (300-600 nm) of cyclobutyl pyrimidine dimers (in cis-syn configuration), which are formed between adjacent bases on the same DNA strand upon exposure to ultraviolet radiation. This Buchnera aphidicola subsp. Acyrthosiphon pisum (strain APS) (Acyrthosiphon pisum symbiotic bacterium) protein is Deoxyribodipyrimidine photo-lyase (phrB).